The primary structure comprises 517 residues: Crotonobetaine/carnitine--CoA ligase (517 aa).

Belongs to the ATP-dependent AMP-binding enzyme family.

The catalysed reaction is 4-(trimethylamino)butanoate + ATP + CoA = 4-(trimethylamino)butanoyl-CoA + AMP + diphosphate. It catalyses the reaction crotonobetaine + ATP + CoA = crotonobetainyl-CoA + AMP + diphosphate. It carries out the reaction (R)-carnitine + ATP + CoA = (R)-carnitinyl-CoA + AMP + diphosphate. Its pathway is amine and polyamine metabolism; carnitine metabolism. In terms of biological role, catalyzes the transfer of CoA to carnitine, generating the initial carnitinyl-CoA needed for the CaiB reaction cycle. Also has activity toward crotonobetaine and gamma-butyrobetaine. This chain is Crotonobetaine/carnitine--CoA ligase, found in Salmonella choleraesuis (strain SC-B67).